Reading from the N-terminus, the 599-residue chain is MFS-type transporter ucsM (599 aa).

The span at 23-34 (AHHHGKEREAHR) shows a compositional bias: basic and acidic residues. The disordered stretch occupies residues 23-42 (AHHHGKEREAHRQSLSSVPG). 8 consecutive transmembrane segments (helical) span residues 147-167 (VALG…GAWL), 178-198 (ILIG…GAVP), 204-224 (GKGT…AGLF), 263-283 (IMLI…ATVY), 291-311 (WLAF…LWYL), 386-406 (IFLY…ILPS), 424-444 (FNPI…YPAL), and 454-474 (ISRI…SSLV). The N-linked (GlcNAc...) asparagine glycan is linked to N517. The next 2 helical transmembrane spans lie at 539 to 559 (LFLF…PAIV) and 563 to 583 (LVWV…IFWV).

The protein belongs to the major facilitator superfamily. Proton-dependent oligopeptide transporter (POT/PTR) (TC 2.A.17) family.

It is found in the membrane. MFS-type transporter; part of the gene cluster that mediates the biosynthesis of UCS1025A, a member of the pyrrolizidinone family that acts as a strong telomerase inhibitor and displays potent antibacterial and antitumor properties. These compounds share a hemiaminal-containing pyrrolizidinone core fused with a gamma-lactone, giving a furopyrrolizidine that is connected to a decalin fragment. This chain is MFS-type transporter ucsM, found in Acremonium sp.